We begin with the raw amino-acid sequence, 427 residues long: Cryptic catabolic NAD-specific glutamate dehydrogenase GudB (427 aa).

Lys80 and Lys107 together coordinate substrate. Catalysis depends on Lys119, which acts as the Proton donor. Residues Thr203 and Asn234 each coordinate NAD(+). Ser361 provides a ligand contact to substrate.

This sequence belongs to the Glu/Leu/Phe/Val dehydrogenases family. In terms of assembly, homohexamer.

The enzyme catalyses L-glutamate + NAD(+) + H2O = 2-oxoglutarate + NH4(+) + NADH + H(+). GudB seems to be intrinsically inactive, however spontaneous mutations removing a 9-bp direct repeat within the wild-type gudB sequence activated the GudB protein and allowed more-efficient utilization of amino acids of the glutamate family (called gutB1). This 3 amino acid insertion presumably causes severe destabilization of the fold of the protein, leading to an inactive enzyme that is very quickly degraded. The cryptic GudB serves as a buffer that may compensate for mutations in the rocG gene and that can also be decryptified for the utilization of glutamate as a single carbon source in the absence of arginine. It is unable to synthesize glutamate. The protein is Cryptic catabolic NAD-specific glutamate dehydrogenase GudB of Bacillus subtilis (strain 168).